The primary structure comprises 126 residues: Glycine cleavage system H protein (126 aa).

The Lipoyl-binding domain occupies 19–100; it reads DGKIGITDHA…AHAAWMVKVE (82 aa). At Lys60 the chain carries N6-lipoyllysine.

This sequence belongs to the GcvH family. In terms of assembly, the glycine cleavage system is composed of four proteins: P, T, L and H. It depends on (R)-lipoate as a cofactor.

In terms of biological role, the glycine cleavage system catalyzes the degradation of glycine. The H protein shuttles the methylamine group of glycine from the P protein to the T protein. This Koribacter versatilis (strain Ellin345) protein is Glycine cleavage system H protein.